The following is a 407-amino-acid chain: Enolase-binding protein (407 aa).

Positions 1–24 are cleaved as a signal peptide; that stretch reads MALGNALYPLTATVFLCVVGFATS. The Extracellular portion of the chain corresponds to 25–366; the sequence is SNENSRFLIN…FGQAYPGFRN (342 aa). 4 N-linked (GlcNAc...) asparagine glycosylation sites follow: asparagine 52, asparagine 78, asparagine 161, and asparagine 250. Residues 367-387 form a helical membrane-spanning segment; that stretch reads VAIGAAILFFSVLGVAIIDMI. The Cytoplasmic portion of the chain corresponds to 388 to 407; that stretch reads RRTIANRRAKRLHLGKYSRT.

(Microbial infection) Interacts with ENO/enolase from parasites P.berghei and P.falciparum. As to expression, expressed in the female midgut epithelium.

Its subcellular location is the cell membrane. (Microbial infection) Acts as a receptor for ENO/enolase from parasites P.berghei and P.falciparum. The interaction is involved in the invasion of the mosquito midgut by P.berghei ookinete, but is dispensable for P.falciparum ookinete invasion. In Anopheles gambiae (African malaria mosquito), this protein is Enolase-binding protein.